Consider the following 324-residue polypeptide: N-acetyl-gamma-glutamyl-phosphate reductase (324 aa).

Cys131 is an active-site residue.

This sequence belongs to the NAGSA dehydrogenase family. Type 1 subfamily.

Its subcellular location is the cytoplasm. It catalyses the reaction N-acetyl-L-glutamate 5-semialdehyde + phosphate + NADP(+) = N-acetyl-L-glutamyl 5-phosphate + NADPH + H(+). It functions in the pathway amino-acid biosynthesis; L-arginine biosynthesis; N(2)-acetyl-L-ornithine from L-glutamate: step 3/4. Functionally, catalyzes the NADPH-dependent reduction of N-acetyl-5-glutamyl phosphate to yield N-acetyl-L-glutamate 5-semialdehyde. The sequence is that of N-acetyl-gamma-glutamyl-phosphate reductase from Bradyrhizobium sp. (strain BTAi1 / ATCC BAA-1182).